Reading from the N-terminus, the 558-residue chain is EF-hand and coiled-coil domain-containing protein 1 (558 aa).

One can recognise an EF-hand domain in the interval 43-78 (GLDQYLQEVFHHLDCRGAGRLPRADFRALCAVLGLN). A compositionally biased stretch (basic residues) spans 161-170 (LRRPRRRRRP). Disordered stretches follow at residues 161–183 (LRRP…YGER) and 304–395 (RSEG…QPSG). 2 coiled-coil regions span residues 179–304 (AYGE…RGYR) and 453–495 (VEAE…LNIS).

The protein is EF-hand and coiled-coil domain-containing protein 1 (Efcc1) of Mus musculus (Mouse).